A 111-amino-acid chain; its full sequence is Nucleoid-associated protein Tmel_0542 (111 aa).

It belongs to the YbaB/EbfC family. As to quaternary structure, homodimer.

Its subcellular location is the cytoplasm. The protein localises to the nucleoid. Its function is as follows. Binds to DNA and alters its conformation. May be involved in regulation of gene expression, nucleoid organization and DNA protection. The protein is Nucleoid-associated protein Tmel_0542 of Thermosipho melanesiensis (strain DSM 12029 / CIP 104789 / BI429).